The primary structure comprises 448 residues: Zinc finger CCCH domain-containing protein 43 (448 aa).

A disordered region spans residues 1–106 (MVNSEEIADG…GWSENESENV (106 aa)). Basic and acidic residues predominate over residues 24 to 45 (SSHDRSLSDLNHAAEDLSDKLK). Polar residues predominate over residues 63-79 (VSESNGGLDSNAVVTIN). Residues 80–89 (QEEEEEEEDR) show a composition bias toward acidic residues. C3H1-type zinc fingers lie at residues 110–138 (RPGA…HPLA), 158–186 (KLGL…HTIP), 204–232 (RPGE…HPDP), 346–374 (RPDQ…HPKN), and 392–420 (RPDQ…HSVQ). The segment at 424 to 448 (STESSQAIVEPPQVSANGNESDGWN) is disordered. Residues 437 to 448 (VSANGNESDGWN) show a composition bias toward polar residues.

It is found in the nucleus. The chain is Zinc finger CCCH domain-containing protein 43 from Arabidopsis thaliana (Mouse-ear cress).